A 128-amino-acid polypeptide reads, in one-letter code: L-ectoine synthase (128 aa).

It belongs to the ectoine synthase family.

It catalyses the reaction (2S)-4-acetamido-2-aminobutanoate = L-ectoine + H2O. Its pathway is amine and polyamine biosynthesis; ectoine biosynthesis; L-ectoine from L-aspartate 4-semialdehyde: step 3/3. In terms of biological role, catalyzes the circularization of gamma-N-acetyl-alpha,gamma-diaminobutyric acid (ADABA) to ectoine (1,4,5,6-tetrahydro-2-methyl-4-pyrimidine carboxylic acid), which is an excellent osmoprotectant. This chain is L-ectoine synthase, found in Vibrio atlanticus (strain LGP32) (Vibrio splendidus (strain Mel32)).